The sequence spans 210 residues: NAD(P)H-quinone oxidoreductase subunit I (210 aa).

4Fe-4S ferredoxin-type domains lie at 54–83 (GRIHFEFDKCIACEICVRVCPIDLPVVDWV) and 94–123 (YSYSIDFGVCIFCANCVEFCPTNCLSVTED). The [4Fe-4S] cluster site is built by cysteine 63, cysteine 66, cysteine 69, cysteine 73, cysteine 103, cysteine 106, cysteine 109, and cysteine 113.

The protein belongs to the complex I 23 kDa subunit family. As to quaternary structure, NDH-1 is composed of at least 11 different subunits. [4Fe-4S] cluster serves as cofactor.

It localises to the cellular thylakoid membrane. The catalysed reaction is a plastoquinone + NADH + (n+1) H(+)(in) = a plastoquinol + NAD(+) + n H(+)(out). It carries out the reaction a plastoquinone + NADPH + (n+1) H(+)(in) = a plastoquinol + NADP(+) + n H(+)(out). In terms of biological role, NDH-1 shuttles electrons from an unknown electron donor, via FMN and iron-sulfur (Fe-S) centers, to quinones in the respiratory and/or the photosynthetic chain. The immediate electron acceptor for the enzyme in this species is believed to be plastoquinone. Couples the redox reaction to proton translocation, and thus conserves the redox energy in a proton gradient. The sequence is that of NAD(P)H-quinone oxidoreductase subunit I from Synechococcus sp. (strain JA-3-3Ab) (Cyanobacteria bacterium Yellowstone A-Prime).